Reading from the N-terminus, the 178-residue chain is 2-oxo-4-hydroxy-4-carboxy-5-ureidoimidazoline decarboxylase (178 aa).

The active-site Proton donor is His-67. Substrate contacts are provided by residues Pro-68, 84-88, and 119-123; these read SQREQ and FVLAA.

Belongs to the OHCU decarboxylase family.

It localises to the peroxisome. The catalysed reaction is 5-hydroxy-2-oxo-4-ureido-2,5-dihydro-1H-imidazole-5-carboxylate + H(+) = (S)-allantoin + CO2. Its pathway is purine metabolism; urate degradation; (S)-allantoin from urate: step 3/3. Functionally, catalyzes the stereoselective decarboxylation of 2-oxo-4-hydroxy-4-carboxy-5-ureidoimidazoline (OHCU) to (S)-allantoin. This is 2-oxo-4-hydroxy-4-carboxy-5-ureidoimidazoline decarboxylase (Urad) from Mus musculus (Mouse).